A 120-amino-acid polypeptide reads, in one-letter code: UPF0231 protein Spro_4007 (120 aa).

Belongs to the UPF0231 family.

The sequence is that of UPF0231 protein Spro_4007 from Serratia proteamaculans (strain 568).